The following is a 583-amino-acid chain: Sphingomyelin phosphodiesterase A (583 aa).

A signal peptide spans M1–S21. One can recognise a Saposin B-type domain in the interval I51–G133. Cystine bridges form between C55/C129, C58/C123, and C86/C97. A glycan (N-linked (GlcNAc...) asparagine) is linked at N72. An N-linked (GlcNAc...) asparagine glycan is attached at N182. 2 residues coordinate Zn(2+): D193 and H195. An intrachain disulfide couples C214 to C229. Zn(2+) is bound by residues D258 and N298. Residue N377 is glycosylated (N-linked (GlcNAc...) asparagine). Zn(2+) is bound by residues H401, H436, and H438. N495, N500, N537, and N547 each carry an N-linked (GlcNAc...) asparagine glycan. C567 and C580 are oxidised to a cystine.

It belongs to the acid sphingomyelinase family. Zn(2+) is required as a cofactor.

The protein resides in the secreted. Functionally, converts sphingomyelin to ceramide. The chain is Sphingomyelin phosphodiesterase A (sgmA) from Dictyostelium discoideum (Social amoeba).